Here is a 326-residue protein sequence, read N- to C-terminus: Putative ribose-phosphate pyrophosphokinase 2 (326 aa).

ATP contacts are provided by residues 43–45 and 102–103; these read DGE and RQ. Residue His-136 participates in Mg(2+) binding. D-ribose 5-phosphate-binding positions include Asp-225 and 229-233; that span reads NTGKT.

Belongs to the ribose-phosphate pyrophosphokinase family. Class I subfamily. As to quaternary structure, homohexamer. Mg(2+) is required as a cofactor.

It is found in the cytoplasm. It carries out the reaction D-ribose 5-phosphate + ATP = 5-phospho-alpha-D-ribose 1-diphosphate + AMP + H(+). The protein operates within metabolic intermediate biosynthesis; 5-phospho-alpha-D-ribose 1-diphosphate biosynthesis; 5-phospho-alpha-D-ribose 1-diphosphate from D-ribose 5-phosphate (route I): step 1/1. Involved in the biosynthesis of the central metabolite phospho-alpha-D-ribosyl-1-pyrophosphate (PRPP) via the transfer of pyrophosphoryl group from ATP to 1-hydroxyl of ribose-5-phosphate (Rib-5-P). The protein is Putative ribose-phosphate pyrophosphokinase 2 of Streptococcus pyogenes serotype M18 (strain MGAS8232).